The sequence spans 307 residues: MTPIVAVVGATGTGKSALSLDIAERLRAEGRAAEIVNADAMQLYRGMDIGTAKLPEVGRRGVPHHMLDVLDVTAEATVAAYQEEARRAIGGILERGAVPILVGGSGLYVSSVLFDYDFPGTDPEIRQRLERELEATGPGMIHRRLRELDPVAAQRIGAHNGRRLVRALEVVEITGPQPERATAEPRPWHPARILALTLPREELVPRLDARVSGMWRDGLVDEVAGLLSAGLADGVTASRAIGYAQAARQLAGELSEEEAMEETRALTRRYARRQVSWFGRYADAVRLDARDDRLLEHALDALPAARP.

ATP is bound at residue 9-16; sequence GATGTGKS. 11–16 contacts substrate; that stretch reads TGTGKS.

Belongs to the IPP transferase family. Monomer. The cofactor is Mg(2+).

The catalysed reaction is adenosine(37) in tRNA + dimethylallyl diphosphate = N(6)-dimethylallyladenosine(37) in tRNA + diphosphate. Its function is as follows. Catalyzes the transfer of a dimethylallyl group onto the adenine at position 37 in tRNAs that read codons beginning with uridine, leading to the formation of N6-(dimethylallyl)adenosine (i(6)A). This is tRNA dimethylallyltransferase from Clavibacter sepedonicus (Clavibacter michiganensis subsp. sepedonicus).